A 144-amino-acid polypeptide reads, in one-letter code: Large ribosomal subunit protein uL13 (144 aa).

Belongs to the universal ribosomal protein uL13 family. As to quaternary structure, part of the 50S ribosomal subunit.

Its function is as follows. This protein is one of the early assembly proteins of the 50S ribosomal subunit, although it is not seen to bind rRNA by itself. It is important during the early stages of 50S assembly. The polypeptide is Large ribosomal subunit protein uL13 (Heliobacterium modesticaldum (strain ATCC 51547 / Ice1)).